The chain runs to 90 residues: Large ribosomal subunit protein bL31B (90 aa).

The protein belongs to the bacterial ribosomal protein bL31 family. Type B subfamily. In terms of assembly, part of the 50S ribosomal subunit.

The sequence is that of Large ribosomal subunit protein bL31B from Pseudomonas fluorescens (strain SBW25).